The primary structure comprises 87 residues: Elongation factor Ts, chloroplastic (87 aa).

It belongs to the EF-Ts family.

The protein localises to the plastid. The protein resides in the chloroplast. Functionally, associates with the EF-Tu.GDP complex and induces the exchange of GDP to GTP. It remains bound to the aminoacyl-tRNA.EF-Tu.GTP complex up to the GTP hydrolysis stage on the ribosome. The chain is Elongation factor Ts, chloroplastic (tsf) from Antithamnion sp. (Red alga).